The following is a 221-amino-acid chain: UPF0502 protein Sputw3181_2381 (221 aa).

Belongs to the UPF0502 family.

This Shewanella sp. (strain W3-18-1) protein is UPF0502 protein Sputw3181_2381.